Here is a 711-residue protein sequence, read N- to C-terminus: MNATHRGAQADASAPAGGLPPATAAERVQWLRDELDRHNYQYYVLDAPTIPDAEYDALFTELQALEAEHPELLTPDSPTQRVGGAPLSAFDTVRHRVPMLSLNNGFSDEDVTGFDRRCAQGLGRSAAAGGEQDLFSAAEGVEYACELKFDGLAMSLRYEDGRLVQAATRGDGETGEDVTVNVRTIKAIPLKLRGAAPAVLEVRGEVFMYRRDFDKLNARQAEAGDKTFVNPRNAAAGSLRQLDPRITAKRPLSFFAYGLGELQGIERPATHSAMLDGFATMGLPVCNERAVVKGAQGLLDFYRKVGEKRDQLPYDIDGVVYKVNALAEQEQLGFVSRAPRFALAHKFPAQEMTTIVEDIEVQVGRTGAITPVARLQPVFVGGVTVTNATLHNEDEVRRKDVHIGDTVIVRRAGDVIPEVVAVVLERRPDDARAFVMPTACPVCGSHIERLEDEAIARCTGGLICAAQRKQALLHFAQRRAMDIEGLGDKVVEQLVDQGIVRTPADLYKLGVAKLAALDRMADKSAGNLVAAIEASRSTTFNRFIFSLGIRHVGEATAKDLARHFGKLDGLMVADEAALLEVNDVGPVVAQSIVNFFGEPHNVEVIEQLRAAGVHWPESEPVARAPAPLAGKTFVLTGTLPSLSREAAKEMLEAAGAKVAGSVSKKTDYVVAGAEAGSKLDKAEALGVPVLDEAGMLALLESVGAGQPGEQS.

Positions 1 to 21 (MNATHRGAQADASAPAGGLPP) are disordered. Residues 10 to 21 (ADASAPAGGLPP) show a composition bias toward low complexity. NAD(+) is bound by residues 52-56 (DAEYD), 101-102 (SL), and glutamate 146. Lysine 148 serves as the catalytic N6-AMP-lysine intermediate. NAD(+)-binding residues include arginine 169, glutamate 205, lysine 322, and lysine 346. The Zn(2+) site is built by cysteine 440, cysteine 443, cysteine 458, and cysteine 464. The BRCT domain maps to 623–711 (RAPAPLAGKT…VGAGQPGEQS (89 aa)).

Belongs to the NAD-dependent DNA ligase family. LigA subfamily. It depends on Mg(2+) as a cofactor. Mn(2+) is required as a cofactor.

The catalysed reaction is NAD(+) + (deoxyribonucleotide)n-3'-hydroxyl + 5'-phospho-(deoxyribonucleotide)m = (deoxyribonucleotide)n+m + AMP + beta-nicotinamide D-nucleotide.. Functionally, DNA ligase that catalyzes the formation of phosphodiester linkages between 5'-phosphoryl and 3'-hydroxyl groups in double-stranded DNA using NAD as a coenzyme and as the energy source for the reaction. It is essential for DNA replication and repair of damaged DNA. This is DNA ligase from Cupriavidus pinatubonensis (strain JMP 134 / LMG 1197) (Cupriavidus necator (strain JMP 134)).